Reading from the N-terminus, the 1017-residue chain is Voltage-gated delayed rectifier potassium channel KCNH4 (1017 aa).

Over 1–232 the chain is Cytoplasmic; the sequence is MPVMKGLLAP…YSIPKAVWDG (232 aa). One can recognise a PAS domain in the interval 14 to 90; it reads FLDTIATRFD…QRLQKALEGH (77 aa). In terms of domain architecture, PAC spans 93 to 145; sequence HRAEICFYRKDGSAFWCLLDMMPIKNELGEVVLFLFSFKDISQSGGPGLGSPG. Residues 139–170 are disordered; it reads PGLGSPGIHGDNNNHENSLGRRGASSRLRSTR. A helical transmembrane segment spans residues 233–253; that stretch reads LILLATFYVAVTVPYNVCFAG. The Extracellular segment spans residues 254–262; sequence DDDTPITSR. The chain crosses the membrane as a helical span at residues 263–283; sequence HTLVSDIAVEMLFILDIILNF. Residues 284-305 are Cytoplasmic-facing; sequence RTTYVSQSGQVVSAPRSIGLHY. A helical transmembrane segment spans residues 306–326; it reads LATWFFVDLIAALPFDLLYVF. The Extracellular segment spans residues 327 to 334; that stretch reads NITVTSLV. A helical; Voltage-sensor membrane pass occupies residues 335–355; the sequence is HLLKTVRLLRLLRLLQKLERY. Residues 356 to 364 lie on the Cytoplasmic side of the membrane; the sequence is SQCSAVVLT. A helical membrane pass occupies residues 365 to 385; it reads LLMSVFALLAHWMACVWYVIG. Over 386-427 the chain is Extracellular; sequence RREMEANDPLLWDIGWLHELGKRLEEPYVNGSAGGPSRRSAY. An N-linked (GlcNAc...) asparagine glycan is attached at Asn415. An intramembrane region (pore-forming) is located at residues 428-448; the sequence is IAALYFTLSSLTSVGFGNVCA. A Selectivity filter motif is present at residues 440 to 445; sequence SVGFGN. Residues 449-454 lie on the Extracellular side of the membrane; sequence NTDAEK. A helical transmembrane segment spans residues 455–475; the sequence is IFSICTMLIGALMHAVVFGNV. At 476 to 1017 the chain is on the cytoplasmic side; the sequence is TAIIQRMYSR…SFQSGSDTFH (542 aa). The interval 557 to 621 is cNMP-binding domain; sequence LFGAASRGCL…AILGKGDLIG (65 aa). Disordered stretches follow at residues 690 to 749 and 771 to 870; these read GSEN…PNLS and LVSS…ELAT. A compositionally biased stretch (polar residues) spans 703-726; it reads PRLSQARSDTLGSSSDKTLPSITE. Composition is skewed to low complexity over residues 771–786 and 806–820; these read LVSSPSLSPTPSPALA and PPQLLTPPLGTFGPP. Residues 873–907 adopt a coiled-coil conformation; the sequence is AEEVKEKVCRLNQEISRLNQEVSQLSRELRQVMGL. The segment at 972-1017 is disordered; that stretch reads SELRSSMVPPFPSEPDPLGPSPVPEASPLTPSLLKHSFQSGSDTFH. The span at 980–996 shows a compositional bias: pro residues; sequence PPFPSEPDPLGPSPVPE. The segment covering 1008–1017 has biased composition (polar residues); sequence SFQSGSDTFH.

The protein belongs to the potassium channel family. H (Eag) (TC 1.A.1.20) subfamily. Kv12.3/KCNH4 sub-subfamily. The potassium channel is probably composed of a homo- or heterotetrameric complex of pore-forming alpha subunits that can associate with modulating beta subunits. Highly expressed in adult testis, and in adult and embryonic brain. In adult brain found in piriform cortex, olfactory tubercle, cerebral cortex, hippocampus pyramidial cells and dentate gyrus and basal ganglia of caudate/putamen and accumbens nucleus. Detected at intermediate levels in lung, spinal cord, and pituitary.

It localises to the membrane. The catalysed reaction is K(+)(in) = K(+)(out). In terms of biological role, pore-forming (alpha) subunit of a voltage-gated delayed rectifier. Activates at more negative voltages, exhibits fast prepulse-independent activation kinetics and deactivates much more slowly, but shows no inactivation. The polypeptide is Voltage-gated delayed rectifier potassium channel KCNH4 (Rattus norvegicus (Rat)).